A 1085-amino-acid chain; its full sequence is Error-prone DNA polymerase 2 (1085 aa).

The segment at 1040 to 1066 is disordered; the sequence is AGRGDEFAHGGGGPDSRDRQKPVVPRD.

This sequence belongs to the DNA polymerase type-C family. DnaE2 subfamily.

It localises to the cytoplasm. It catalyses the reaction DNA(n) + a 2'-deoxyribonucleoside 5'-triphosphate = DNA(n+1) + diphosphate. DNA polymerase involved in damage-induced mutagenesis and translesion synthesis (TLS). It is not the major replicative DNA polymerase. The protein is Error-prone DNA polymerase 2 of Agrobacterium fabrum (strain C58 / ATCC 33970) (Agrobacterium tumefaciens (strain C58)).